The chain runs to 315 residues: MACAEYSFHVPSLEELVGVLQKGLTDNFAEVQVSVVDCPDLTKEPFTFPIKGICGKTRIAEVGGVPYLLPLVNEKKVYDLNKIAKDIQLPGAFVLGAGAGPFQTLGFNSEFMLLVQTESEHRPPVNGSYFARVNPADGGCLLEKYSEKYHDFGCALLANLFASEGQPGKVIEVKVKRRTGKLNFVTCMRQTLEKHYGDKPVGMGGAFIIQKGKVKTHIMPAEFSSCPLNSDEDVNKWLHFYEMKAPLVCLPVFVSRDPGFDLRLEHTHCFSHHGEGGHYHYDTTPDIVEYLGYFLPAEFLYRIDQPKETHSFGRD.

The Zn(2+) site is built by His-266, His-268, and His-278.

In terms of assembly, monomer.

The protein localises to the nucleus. Its function is as follows. Exhibits ester hydrolase activity on the substrate p-nitrophenyl acetate. The chain is Ester hydrolase C11orf54 homolog from Bos taurus (Bovine).